Here is a 501-residue protein sequence, read N- to C-terminus: Amidophosphoribosyltransferase (501 aa).

Cys-2 acts as the Nucleophile in catalysis. Residues Cys-2 to Glu-234 enclose the Glutamine amidotransferase type-2 domain. Residues Thr-303, Asp-365, and Asp-366 each coordinate Mg(2+).

In the C-terminal section; belongs to the purine/pyrimidine phosphoribosyltransferase family. The cofactor is Mg(2+).

It carries out the reaction 5-phospho-beta-D-ribosylamine + L-glutamate + diphosphate = 5-phospho-alpha-D-ribose 1-diphosphate + L-glutamine + H2O. Its pathway is purine metabolism; IMP biosynthesis via de novo pathway; N(1)-(5-phospho-D-ribosyl)glycinamide from 5-phospho-alpha-D-ribose 1-diphosphate: step 1/2. Its function is as follows. Catalyzes the formation of phosphoribosylamine from phosphoribosylpyrophosphate (PRPP) and glutamine. This Pseudomonas aeruginosa (strain ATCC 15692 / DSM 22644 / CIP 104116 / JCM 14847 / LMG 12228 / 1C / PRS 101 / PAO1) protein is Amidophosphoribosyltransferase.